A 92-amino-acid polypeptide reads, in one-letter code: Acylphosphatase (92 aa).

The Acylphosphatase-like domain maps to 5–92 (YIVAYVYGVV…TPFETFSIRY (88 aa)). Active-site residues include R20 and N38.

Belongs to the acylphosphatase family.

The enzyme catalyses an acyl phosphate + H2O = a carboxylate + phosphate + H(+). This Yersinia pseudotuberculosis serotype O:1b (strain IP 31758) protein is Acylphosphatase (acyP).